A 596-amino-acid chain; its full sequence is Protein NRT1/ PTR FAMILY 3.1 (596 aa).

A compositionally biased stretch (basic and acidic residues) spans 1–16 (MEEQSKNKISEEEKQL). The interval 1–23 (MEEQSKNKISEEEKQLHGRPNRP) is disordered. Helical transmembrane passes span 27–47 (LITM…VVGF), 73–93 (FAGT…SFAG), 98–118 (ITFA…SAII), 137–157 (TAQL…SGGI), 185–205 (NWYY…LVWI), 213–233 (LGLG…VGGF), 334–354 (MGPI…QGTF), 372–392 (IPAG…IIFY), 416–436 (MGIG…VEVK), 453–473 (IVPI…VAEA), 497–517 (ALFW…VTLV), and 542–562 (YFYW…LWCA).

Belongs to the major facilitator superfamily. Proton-dependent oligopeptide transporter (POT/PTR) (TC 2.A.17) family. Expressed in shoots, stems, leaves, flowers and siliques.

It localises to the membrane. Its function is as follows. May act as an efflux-type nitrite transporter. Not regulated by the PII protein involved in the regulation of nitrite uptake into higher plant chloroplasts. This Arabidopsis thaliana (Mouse-ear cress) protein is Protein NRT1/ PTR FAMILY 3.1 (NPF3.1).